Here is a 494-residue protein sequence, read N- to C-terminus: UDP-N-acetylmuramoyl-L-alanyl-D-glutamate--2,6-diaminopimelate ligase (494 aa).

Ser32 is a binding site for UDP-N-acetyl-alpha-D-muramoyl-L-alanyl-D-glutamate. ATP is bound at residue 112–118 (GTNGKTT). Residues Asn153, 154-155 (TT), Ser181, and Arg189 contribute to the UDP-N-acetyl-alpha-D-muramoyl-L-alanyl-D-glutamate site. Lys221 bears the N6-carboxylysine mark. Residues Arg383, 407–410 (DNPR), Gly459, and Glu463 contribute to the meso-2,6-diaminopimelate site. Positions 407–410 (DNPR) match the Meso-diaminopimelate recognition motif motif.

The protein belongs to the MurCDEF family. MurE subfamily. Mg(2+) is required as a cofactor. Post-translationally, carboxylation is probably crucial for Mg(2+) binding and, consequently, for the gamma-phosphate positioning of ATP.

The protein resides in the cytoplasm. The enzyme catalyses UDP-N-acetyl-alpha-D-muramoyl-L-alanyl-D-glutamate + meso-2,6-diaminopimelate + ATP = UDP-N-acetyl-alpha-D-muramoyl-L-alanyl-gamma-D-glutamyl-meso-2,6-diaminopimelate + ADP + phosphate + H(+). It participates in cell wall biogenesis; peptidoglycan biosynthesis. Functionally, catalyzes the addition of meso-diaminopimelic acid to the nucleotide precursor UDP-N-acetylmuramoyl-L-alanyl-D-glutamate (UMAG) in the biosynthesis of bacterial cell-wall peptidoglycan. The protein is UDP-N-acetylmuramoyl-L-alanyl-D-glutamate--2,6-diaminopimelate ligase of Solibacter usitatus (strain Ellin6076).